The following is a 118-amino-acid chain: uncharacterized protein (118 aa).

This sequence belongs to the transposase IS3/IS150/IS904 family.

This is an uncharacterized protein from Haemophilus influenzae (strain ATCC 51907 / DSM 11121 / KW20 / Rd).